The chain runs to 58 residues: KappaPI-actitoxin-Avd3c (58 aa).

In terms of domain architecture, BPTI/Kunitz inhibitor spans 5–55 (CLLPMDVGRCRARHPRYYYNSSSRRCEKFIYGGCRGNANNFITKKECEKVC). Intrachain disulfides connect C5/C55, C14/C38, and C30/C51.

The protein belongs to the venom Kunitz-type family. Sea anemone type 2 potassium channel toxin subfamily.

Its subcellular location is the secreted. The protein resides in the nematocyst. Its function is as follows. Dual-function toxin that inhibits both the serine protease trypsin (Kd&lt;30 nM) and voltage-gated potassium channels Kv1.2/KCNA2 (IC(50)=1100 nM). In Anemonia sulcata (Mediterranean snakelocks sea anemone), this protein is KappaPI-actitoxin-Avd3c.